The chain runs to 435 residues: Serine--tRNA ligase (435 aa).

241–243 (TAE) provides a ligand contact to L-serine. Position 272–274 (272–274 (RSE)) interacts with ATP. Glu295 is an L-serine binding site. 359-362 (EISS) is a binding site for ATP. Residue Ser395 coordinates L-serine.

Belongs to the class-II aminoacyl-tRNA synthetase family. Type-1 seryl-tRNA synthetase subfamily. As to quaternary structure, homodimer. The tRNA molecule binds across the dimer.

It is found in the cytoplasm. It carries out the reaction tRNA(Ser) + L-serine + ATP = L-seryl-tRNA(Ser) + AMP + diphosphate + H(+). The catalysed reaction is tRNA(Sec) + L-serine + ATP = L-seryl-tRNA(Sec) + AMP + diphosphate + H(+). It participates in aminoacyl-tRNA biosynthesis; selenocysteinyl-tRNA(Sec) biosynthesis; L-seryl-tRNA(Sec) from L-serine and tRNA(Sec): step 1/1. Catalyzes the attachment of serine to tRNA(Ser). Is also able to aminoacylate tRNA(Sec) with serine, to form the misacylated tRNA L-seryl-tRNA(Sec), which will be further converted into selenocysteinyl-tRNA(Sec). The protein is Serine--tRNA ligase of Actinobacillus pleuropneumoniae serotype 7 (strain AP76).